The following is a 314-amino-acid chain: Large ribosomal subunit protein uL10 (314 aa).

The segment at 285–314 is disordered; that stretch reads GAAAGGAAAEEEKEEEEESDEEGGFGDLFG. Acidic residues predominate over residues 293–308; sequence AEEEKEEEEESDEEGG. Serine 303 is subject to Phosphoserine; by CK1.

Belongs to the universal ribosomal protein uL10 family. Component of the large ribosomal subunit. P0 forms a pentameric complex by interaction with dimers of P1 and P2. In terms of processing, phosphorylated.

Functionally, ribosomal protein P0 is the functional equivalent of E.coli protein L10. The protein is Large ribosomal subunit protein uL10 of Podospora anserina (Pleurage anserina).